The primary structure comprises 45 residues: Iota-conotoxin-like R11.12 (45 aa).

4 disulfides stabilise this stretch: C5–C19, C12–C22, C18–C27, and C21–C36. A D-leucine modification is found at L43. Position 45 (R45) is a propeptide, removed by a carboxypeptidase.

Belongs to the conotoxin I1 superfamily. Expressed by the venom duct.

The protein localises to the secreted. Iota-conotoxins bind to voltage-gated sodium channels (Nav) and act as agonists by shifting the voltage-dependence of activation to more hyperpolarized levels. Produces general excitatory symptoms. This chain is Iota-conotoxin-like R11.12, found in Conus radiatus (Rayed cone).